We begin with the raw amino-acid sequence, 24 residues long: Humanin-like 9 (24 aa).

Belongs to the humanin family. In terms of tissue distribution, highly expressed in the kidney, heart muscle and testis.

The protein resides in the secreted. It is found in the cytoplasm. In terms of biological role, plays a role as a neuroprotective and antiapoptotic factor. The protein is Humanin-like 9 of Homo sapiens (Human).